The chain runs to 541 residues: DNA polymerase epsilon subunit B (541 aa).

The protein belongs to the DNA polymerase epsilon subunit B family. In terms of assembly, heterotetramer. Consists of four subunits: POL2, DPB2, DPB3 and DPB4.

It is found in the nucleus. As accessory component of the DNA polymerase epsilon (DNA polymerase II) participates in chromosomal DNA replication. This is DNA polymerase epsilon subunit B (DPB2) from Cryptococcus neoformans var. neoformans serotype D (strain B-3501A) (Filobasidiella neoformans).